The following is a 181-amino-acid chain: ADP-ribosylation factor 1 (181 aa).

Gly2 is lipidated: N-myristoyl glycine. An important for the stable binding to the membranes region spans residues 3–16 (NMFANLFKGLFGKK). GTP contacts are provided by residues 24–32 (GLDAAGKTT), 126–129 (NKQD), and Ala160.

The protein belongs to the small GTPase superfamily. Arf family.

The protein localises to the golgi apparatus membrane. The enzyme catalyses GTP + H2O = GDP + phosphate + H(+). Alternates between an inactive GDP-bound form and an active GTP-bound form. Activated by a guanine nucleotide-exchange factor (GEF) and inactivated by GTPase-activating protein (GAP). Small GTPase involved in protein trafficking between different compartments. Modulates vesicle budding and uncoating within the Golgi complex. In its GTP-bound form, triggers the recruitment of coatomer proteins to the Golgi membrane. The hydrolysis of ARF1-bound GTP, which is mediated by ARFGAPs proteins, is required for dissociation of coat proteins from Golgi membranes and vesicles. In Xenopus laevis (African clawed frog), this protein is ADP-ribosylation factor 1 (arf1).